A 102-amino-acid polypeptide reads, in one-letter code: MYAIIETGGKQFRVEEGAKIFVEKLVAEAGSEIVIDKVLMLGGGAFSVGAPYVEGAKVTAEVVEHGRGEKLIVFKKWRRNDSRKKQGHRQDFTALKIKAIQA.

It belongs to the bacterial ribosomal protein bL21 family. Part of the 50S ribosomal subunit. Contacts protein L20.

Its function is as follows. This protein binds to 23S rRNA in the presence of protein L20. The polypeptide is Large ribosomal subunit protein bL21 (Nitratidesulfovibrio vulgaris (strain DSM 19637 / Miyazaki F) (Desulfovibrio vulgaris)).